A 484-amino-acid polypeptide reads, in one-letter code: Glutamyl-tRNA(Gln) amidotransferase subunit A (484 aa).

Active-site charge relay system residues include K77 and S152. S176 serves as the catalytic Acyl-ester intermediate.

It belongs to the amidase family. GatA subfamily. As to quaternary structure, heterotrimer of A, B and C subunits.

It catalyses the reaction L-glutamyl-tRNA(Gln) + L-glutamine + ATP + H2O = L-glutaminyl-tRNA(Gln) + L-glutamate + ADP + phosphate + H(+). Its function is as follows. Allows the formation of correctly charged Gln-tRNA(Gln) through the transamidation of misacylated Glu-tRNA(Gln) in organisms which lack glutaminyl-tRNA synthetase. The reaction takes place in the presence of glutamine and ATP through an activated gamma-phospho-Glu-tRNA(Gln). In Lacticaseibacillus paracasei (strain ATCC 334 / BCRC 17002 / CCUG 31169 / CIP 107868 / KCTC 3260 / NRRL B-441) (Lactobacillus paracasei), this protein is Glutamyl-tRNA(Gln) amidotransferase subunit A.